The sequence spans 441 residues: Proline--tRNA ligase (441 aa).

This sequence belongs to the class-II aminoacyl-tRNA synthetase family. ProS type 2 subfamily. Homodimer.

Its subcellular location is the cytoplasm. It carries out the reaction tRNA(Pro) + L-proline + ATP = L-prolyl-tRNA(Pro) + AMP + diphosphate. Functionally, catalyzes the attachment of proline to tRNA(Pro) in a two-step reaction: proline is first activated by ATP to form Pro-AMP and then transferred to the acceptor end of tRNA(Pro). This Methylobacterium radiotolerans (strain ATCC 27329 / DSM 1819 / JCM 2831 / NBRC 15690 / NCIMB 10815 / 0-1) protein is Proline--tRNA ligase.